The following is a 120-amino-acid chain: NAD(P)H-quinone oxidoreductase subunit 3 (120 aa).

3 consecutive transmembrane segments (helical) span residues 6–26, 64–84, and 89–109; these read GYDA…LALV, MFAL…PWAV, and LGLL…VALA.

It belongs to the complex I subunit 3 family. NDH-1 can be composed of about 15 different subunits; different subcomplexes with different compositions have been identified which probably have different functions.

Its subcellular location is the cellular thylakoid membrane. It catalyses the reaction a plastoquinone + NADH + (n+1) H(+)(in) = a plastoquinol + NAD(+) + n H(+)(out). The enzyme catalyses a plastoquinone + NADPH + (n+1) H(+)(in) = a plastoquinol + NADP(+) + n H(+)(out). NDH-1 shuttles electrons from an unknown electron donor, via FMN and iron-sulfur (Fe-S) centers, to quinones in the respiratory and/or the photosynthetic chain. The immediate electron acceptor for the enzyme in this species is believed to be plastoquinone. Couples the redox reaction to proton translocation, and thus conserves the redox energy in a proton gradient. Cyanobacterial NDH-1 also plays a role in inorganic carbon-concentration. This Prochlorococcus marinus (strain SARG / CCMP1375 / SS120) protein is NAD(P)H-quinone oxidoreductase subunit 3.